An 83-amino-acid polypeptide reads, in one-letter code: Large ribosomal subunit protein bL31B (83 aa).

The protein belongs to the bacterial ribosomal protein bL31 family. Type B subfamily. As to quaternary structure, part of the 50S ribosomal subunit.

The protein is Large ribosomal subunit protein bL31B of Lactobacillus johnsonii (strain CNCM I-12250 / La1 / NCC 533).